A 456-amino-acid polypeptide reads, in one-letter code: Dihydroorotase (456 aa).

Histidine 60 and histidine 62 together coordinate Zn(2+). Substrate-binding positions include 62–64 (HFR) and asparagine 94. Zn(2+) contacts are provided by glutamate 146, histidine 180, histidine 234, and aspartate 313. The active site involves aspartate 313. Residue histidine 317 coordinates substrate.

The protein belongs to the metallo-dependent hydrolases superfamily. DHOase family. Class I DHOase subfamily. Zn(2+) is required as a cofactor.

The enzyme catalyses (S)-dihydroorotate + H2O = N-carbamoyl-L-aspartate + H(+). It functions in the pathway pyrimidine metabolism; UMP biosynthesis via de novo pathway; (S)-dihydroorotate from bicarbonate: step 3/3. Its function is as follows. Catalyzes the reversible cyclization of carbamoyl aspartate to dihydroorotate. The protein is Dihydroorotase of Methanosarcina mazei (strain ATCC BAA-159 / DSM 3647 / Goe1 / Go1 / JCM 11833 / OCM 88) (Methanosarcina frisia).